Reading from the N-terminus, the 431-residue chain is Enolase (431 aa).

A (2R)-2-phosphoglycerate-binding site is contributed by Gln167. The Proton donor role is filled by Glu209. The Mg(2+) site is built by Asp246, Glu289, and Asp316. (2R)-2-phosphoglycerate-binding residues include Lys341, Arg370, Ser371, and Lys392. The active-site Proton acceptor is Lys341.

Belongs to the enolase family. Component of the RNA degradosome, a multiprotein complex involved in RNA processing and mRNA degradation. Mg(2+) is required as a cofactor.

It localises to the cytoplasm. Its subcellular location is the secreted. It is found in the cell surface. It catalyses the reaction (2R)-2-phosphoglycerate = phosphoenolpyruvate + H2O. Its pathway is carbohydrate degradation; glycolysis; pyruvate from D-glyceraldehyde 3-phosphate: step 4/5. Functionally, catalyzes the reversible conversion of 2-phosphoglycerate (2-PG) into phosphoenolpyruvate (PEP). It is essential for the degradation of carbohydrates via glycolysis. This chain is Enolase, found in Shewanella woodyi (strain ATCC 51908 / MS32).